Reading from the N-terminus, the 321-residue chain is MSMKGISSAESDKLSRRISLTHKRNSEELDVFEAAVYFGYNEASSGDHGHTQKYGYNAAREENPRRWGILGGGRRISLDLPIRCSEQVYHLQQDHHEKHEVTTIKERLGNVRHKQPSSPGGKIASFLNSLFHQAGSKKNKSKSKSKTKPTDPEVEEEIPGGGWMRRRRRSSISHFFSSSRSTSTTTTTTASSSSKSLISSSSSGFRTPPPYLNTPTKNYKQFLNYTSATKQVGEEETKTNKEYSWLDEKLKVMESLSENQRIWSDDEDIDDDRRIKREGEDDGMESDSSSDLFELQNYELSRGGLPVYETTNVANINKTHI.

The interval 134 to 217 is disordered; it reads AGSKKNKSKS…PPPYLNTPTK (84 aa). Residues 135–147 show a composition bias toward basic residues; it reads GSKKNKSKSKSKT. Low complexity predominate over residues 172-206; it reads ISHFFSSSRSTSTTTTTTASSSSKSLISSSSSGFR.

The protein belongs to the BIG GRAIN 1 (BG1) plant protein family.

Its subcellular location is the cell membrane. Functionally, involved in auxin transport. Regulator of the auxin signaling pathway. This Arabidopsis thaliana (Mouse-ear cress) protein is Protein BIG GRAIN 1-like E.